The chain runs to 145 residues: Ribonuclease H (145 aa).

An RNase H type-1 domain is found at 2–143; it reads SKKEVAIYTD…ADSLARKAII (142 aa). Residues Asp11, Glu49, Asp71, and Asp135 each coordinate Mg(2+).

The protein belongs to the RNase H family. In terms of assembly, monomer. It depends on Mg(2+) as a cofactor.

It is found in the cytoplasm. It catalyses the reaction Endonucleolytic cleavage to 5'-phosphomonoester.. Functionally, endonuclease that specifically degrades the RNA of RNA-DNA hybrids. This Wolbachia sp. subsp. Drosophila simulans (strain wRi) protein is Ribonuclease H.